Consider the following 530-residue polypeptide: MRRLWGAARKPSGAGWEKEWAEAPQEAPGAWSGRLGPGRSGRKGRAVPGWASWPAHLALAARPARHLGGAGQGPRPLDSGTAPFHSRASGERQRRLEPQLQHESRCRSSTPADAWRAEAALPVRAMGAPWGSPTAAAGGRRRWRRGRGLPWTVCVLAAAGLTCTALITYACWGQLPPLPWASPTPSRPVGVLLWWEPFAGRHSAPRPPPDCRLRFNISGCRLLTDRASYGEAQAVLFHHRDLVKGPPDWPPPWGVQAHTAEEVDLRVLDYEEAAAAAEALATSSPRPPGQRWVWMNFESPSHSPGLRSLASNLFNWTLSYRADSDVFVPYGYLYPRSHPGDPPSGLAPPLSRKQGLVAWVVSHWDERQARVRYYHQLSQHVTVDVFGRGGPGQPVPEIGLLHTVARYKFYLAFENSQHLDYITEKLWRNALLAGAVPVVLGPDRANYERFVPRGAFIHVDDFPSASSLASYLLFLDRNPAVYRRYFHWRRSYAVHITSFWDEPWCRVCQAVQRAGDRPKSIRNLASWFER.

2 disordered regions span residues 1 to 48 (MRRL…RAVP) and 66 to 113 (HLGG…TPAD). Topologically, residues 1–147 (MRRLWGAARK…GGRRRWRRGR (147 aa)) are cytoplasmic. Basic and acidic residues predominate over residues 88–106 (ASGERQRRLEPQLQHESRC). A helical; Signal-anchor for type II membrane protein membrane pass occupies residues 148–172 (GLPWTVCVLAAAGLTCTALITYACW). Topologically, residues 173-530 (GQLPPLPWAS…IRNLASWFER (358 aa)) are lumenal. Asparagine 216 and asparagine 315 each carry an N-linked (GlcNAc...) asparagine glycan.

It belongs to the glycosyltransferase 10 family.

Its subcellular location is the golgi apparatus. It is found in the golgi stack membrane. It carries out the reaction a beta-D-galactosyl-(1-&gt;4)-N-acetyl-beta-D-glucosaminyl derivative + GDP-beta-L-fucose = a beta-D-galactosyl-(1-&gt;4)-[alpha-L-fucosyl-(1-&gt;3)]-N-acetyl-beta-D-glucosaminyl derivative + GDP + H(+). The enzyme catalyses an N-acetyl-alpha-neuraminyl-(2-&gt;3)-beta-D-galactosyl-(1-&gt;4)-N-acetyl-beta-D-glucosaminyl derivative + GDP-beta-L-fucose = an alpha-Neu5Ac-(2-&gt;3)-beta-D-Gal-(1-&gt;4)-[alpha-L-Fuc-(1-&gt;3)]-beta-D-GlcNAc derivative + GDP + H(+). It catalyses the reaction an alpha-Neu5Ac-(2-&gt;3)-beta-D-Gal-(1-&gt;4)-beta-D-GlcNAc-(1-&gt;3)-beta-D-Gal-(1-&gt;4)-beta-D-GlcNAc derivative + GDP-beta-L-fucose = an alpha-Neu5Ac-(2-&gt;3)-beta-D-Gal-(1-&gt;4)-beta-D-GlcNAc-(1-&gt;3)-beta-D-Gal-(1-&gt;4)-[alpha-L-Fuc-(1-&gt;3)]-beta-D-GlcNAc derivative + GDP + H(+). The catalysed reaction is an alpha-Neu5Ac-(2-&gt;3)-beta-D-Gal-(1-&gt;4)-beta-D-GlcNAc6S derivative + GDP-beta-L-fucose = an alpha-Neu5Ac-(2-&gt;3)-beta-D-Gal-(1-&gt;4)-[alpha-L-Fuc-(1-&gt;3)]-beta-D-GlcNAc6S derivative + GDP + H(+). Its pathway is protein modification; protein glycosylation. Its function is as follows. Catalyzes alpha(1-&gt;3) linkage of fucosyl moiety transferred from GDP-beta-L-fucose to N-acetyl glucosamine (GlcNAc) within type 2 lactosamine (LacNAc, Gal-beta(1-&gt;4)GlcNAc) glycan attached to N- or O-linked glycoproteins. Robustly fucosylates nonsialylated distal LacNAc unit of the polylactosamine chain to form Lewis X antigen (CD15), a glycan determinant known to mediate important cellular functions in development and immunity. Fucosylates with lower efficiency sialylated LacNAc acceptors to form sialyl Lewis X and 6-sulfo sialyl Lewis X determinants that serve as recognition epitopes for C-type lectins. Together with FUT7 contributes to SELE, SELL and SELP selectin ligand biosynthesis and selectin-dependent lymphocyte homing, leukocyte migration and blood leukocyte homeostasis. In a cell type specific manner, may also fucosylate the internal LacNAc unit of the polylactosamine chain to form VIM-2 antigen that serves as recognition epitope for SELE. The protein is Alpha-(1,3)-fucosyltransferase 4 (FUT4) of Pan troglodytes (Chimpanzee).